Here is a 312-residue protein sequence, read N- to C-terminus: Secreted RxLR effector protein 14 (312 aa).

A signal peptide spans 1 to 20; sequence MHSFKLLLALIVAICTSCDA. Residues 46–61 carry the RxLR-dEER motif; it reads RLLRAKDGKVRADEER.

This sequence belongs to the RxLR effector family.

It localises to the secreted. The protein localises to the host nucleus. Functionally, secreted effector that completely suppresses the host cell death induced by cell death-inducing proteins. This Plasmopara viticola (Downy mildew of grapevine) protein is Secreted RxLR effector protein 14.